The sequence spans 311 residues: Ribosomal RNA small subunit methyltransferase H (311 aa).

Residues 32–34, Asp52, Phe79, Asp100, and Gln107 contribute to the S-adenosyl-L-methionine site; that span reads AGH.

It belongs to the methyltransferase superfamily. RsmH family.

The protein resides in the cytoplasm. The enzyme catalyses cytidine(1402) in 16S rRNA + S-adenosyl-L-methionine = N(4)-methylcytidine(1402) in 16S rRNA + S-adenosyl-L-homocysteine + H(+). In terms of biological role, specifically methylates the N4 position of cytidine in position 1402 (C1402) of 16S rRNA. This is Ribosomal RNA small subunit methyltransferase H from Staphylococcus haemolyticus (strain JCSC1435).